Reading from the N-terminus, the 471-residue chain is Heat shock 70 kDa protein 13 (471 aa).

The signal sequence occupies residues 1–22; sequence MAREMTILGSAVLTLLLAGYLA. Over residues 315–341 the composition is skewed to basic and acidic residues; sequence EQDRKEPHSSDTELPKDKLSSADDHRV. The tract at residues 315–352 is disordered; that stretch reads EQDRKEPHSSDTELPKDKLSSADDHRVNSGFGRGLSDK.

This sequence belongs to the heat shock protein 70 family. As to quaternary structure, binds UBQLN2. In terms of tissue distribution, constitutively expressed in all tissues.

Its subcellular location is the microsome. It localises to the endoplasmic reticulum. Has peptide-independent ATPase activity. This chain is Heat shock 70 kDa protein 13 (HSPA13), found in Homo sapiens (Human).